We begin with the raw amino-acid sequence, 244 residues long: 5-oxoprolinase subunit A (244 aa).

The protein belongs to the LamB/PxpA family. As to quaternary structure, forms a complex composed of PxpA, PxpB and PxpC.

It catalyses the reaction 5-oxo-L-proline + ATP + 2 H2O = L-glutamate + ADP + phosphate + H(+). Catalyzes the cleavage of 5-oxoproline to form L-glutamate coupled to the hydrolysis of ATP to ADP and inorganic phosphate. The chain is 5-oxoprolinase subunit A from Shigella sonnei (strain Ss046).